The following is a 571-amino-acid chain: Proline--tRNA ligase (571 aa).

This sequence belongs to the class-II aminoacyl-tRNA synthetase family. ProS type 1 subfamily. In terms of assembly, homodimer.

It is found in the cytoplasm. It catalyses the reaction tRNA(Pro) + L-proline + ATP = L-prolyl-tRNA(Pro) + AMP + diphosphate. Its function is as follows. Catalyzes the attachment of proline to tRNA(Pro) in a two-step reaction: proline is first activated by ATP to form Pro-AMP and then transferred to the acceptor end of tRNA(Pro). As ProRS can inadvertently accommodate and process non-cognate amino acids such as alanine and cysteine, to avoid such errors it has two additional distinct editing activities against alanine. One activity is designated as 'pretransfer' editing and involves the tRNA(Pro)-independent hydrolysis of activated Ala-AMP. The other activity is designated 'posttransfer' editing and involves deacylation of mischarged Ala-tRNA(Pro). The misacylated Cys-tRNA(Pro) is not edited by ProRS. This chain is Proline--tRNA ligase, found in Shewanella putrefaciens (strain CN-32 / ATCC BAA-453).